A 1408-amino-acid chain; its full sequence is DNA-directed RNA polymerase subunit beta' (1408 aa).

Cys70, Cys72, Cys85, and Cys88 together coordinate Zn(2+). 3 residues coordinate Mg(2+): Asp460, Asp462, and Asp464. Residues Cys822, Cys896, Cys903, and Cys906 each coordinate Zn(2+). The disordered stretch occupies residues 1386–1408 (DTGEAPPLSEEETGEIRNSGYAV).

This sequence belongs to the RNA polymerase beta' chain family. The RNAP catalytic core consists of 2 alpha, 1 beta, 1 beta' and 1 omega subunit. When a sigma factor is associated with the core the holoenzyme is formed, which can initiate transcription. Requires Mg(2+) as cofactor. The cofactor is Zn(2+).

It catalyses the reaction RNA(n) + a ribonucleoside 5'-triphosphate = RNA(n+1) + diphosphate. In terms of biological role, DNA-dependent RNA polymerase catalyzes the transcription of DNA into RNA using the four ribonucleoside triphosphates as substrates. This Nitrosospira multiformis (strain ATCC 25196 / NCIMB 11849 / C 71) protein is DNA-directed RNA polymerase subunit beta'.